We begin with the raw amino-acid sequence, 330 residues long: tRNA (guanine(37)-N(1))-methyltransferase Trm5b (330 aa).

S-adenosyl-L-methionine-binding positions include Arg173, 211-212 (DI), 238-239 (DS), and Asn252.

It belongs to the class I-like SAM-binding methyltransferase superfamily. TRM5/TYW2 family.

It is found in the cytoplasm. The enzyme catalyses guanosine(37) in tRNA + S-adenosyl-L-methionine = N(1)-methylguanosine(37) in tRNA + S-adenosyl-L-homocysteine + H(+). In terms of biological role, specifically methylates the N1 position of guanosine-37 in various tRNAs. The polypeptide is tRNA (guanine(37)-N(1))-methyltransferase Trm5b (Pyrococcus abyssi (strain GE5 / Orsay)).